A 544-amino-acid chain; its full sequence is Serine/threonine-protein kinase PAK 1 (544 aa).

Positions Met-1 to Ser-79 are disordered. N-acetylserine is present on Ser-2. Ser-21 bears the Phosphoserine; by PKB and autocatalysis mark. The residue at position 57 (Ser-57) is a Phosphoserine; by autocatalysis. Residues Lys-68 to Ser-79 show a composition bias toward basic and acidic residues. The tract at residues Lys-70–Gln-140 is autoregulatory region. A CRIB domain is found at Ile-75 to Gly-88. Positions Ile-75 to Arg-105 are GTPase-binding. Phosphothreonine; by OXSR1 is present on Thr-84. A Phosphoserine modification is found at Ser-115. Residues Tyr-131 and Tyr-142 each carry the phosphotyrosine modification. Residues Ser-144 and Ser-149 each carry the phosphoserine; by autocatalysis modification. Positions Ala-150–Glu-166 are enriched in polar residues. A disordered region spans residues Ala-150 to His-195. At Tyr-153 the chain carries Phosphotyrosine; by JAK2. Phosphoserine is present on Ser-174. A compositionally biased stretch (acidic residues) spans Ser-174 to Ala-183. Position 184 is a phosphothreonine (Thr-184). Residue Ser-198 is modified to Phosphoserine; by autocatalysis. Tyr-200 bears the Phosphotyrosine; by JAK2 mark. The residue at position 203 (Ser-203) is a Phosphoserine; by autocatalysis. The interval Pro-209–Glu-250 is disordered. Phosphothreonine is present on residues Thr-211 and Thr-218. Ser-219 and Ser-222 each carry phosphoserine. A compositionally biased stretch (polar residues) spans Ser-219–Pro-230. A phosphothreonine mark is found at Thr-224, Thr-228, and Thr-229. A Protein kinase domain is found at Tyr-269–Leu-520. Ile-275–Val-283 is a binding site for ATP. The residue at position 284 (Tyr-284) is a Phosphotyrosine; by JAK2. Lys-298 contributes to the ATP binding site. The active-site Proton acceptor is Asp-388. Position 422 is a phosphothreonine; by autocatalysis, BRSK2 and PDPK1 (Thr-422).

It belongs to the protein kinase superfamily. STE Ser/Thr protein kinase family. STE20 subfamily. In terms of assembly, homodimer in its autoinhibited state. Active as monomer. Interacts with GIT1. Component of cytoplasmic complexes, which also contains PXN, ARHGEF7 and GIT1. Interacts with NISCH. Interacts with DVL1; mediates the formation of a DVL1, MUSK and PAK1 ternary complex involved in AChR clustering. Binds to the caspase-cleaved p110 isoform of CDC2L1 and CDC2L2, p110C, but not the full-length proteins. Interacts with ARHGEF7. Interacts with SCRIB. Interacts with PDPK1. Interacts (via kinase domain) with RAF1. Interacts with NCK1 and NCK2. Interacts with TBCB. Interacts with BRSK2. Interacts tightly with GTP-bound but not GDP-bound CDC42/P21 and RAC1. Interacts with SNAI1. Interacts with CIB1 (via N-terminal region); the interaction is direct, promotes PAK1 activity and occurs in a calcium-dependent manner. Interacts with INPP5K. Interacts with gamma-tubulin. Interacts with RHOU; the interaction promotes PAK1 activation. Mg(2+) serves as cofactor. Autophosphorylated in trans, meaning that in a dimer, one kinase molecule phosphorylates the other one. Activated by autophosphorylation at Thr-422 in response to a conformation change, triggered by interaction with GTP-bound CDC42 or RAC1. Activated by phosphorylation at Thr-422 by PDPK1. Phosphorylated by JAK2 in response to PRL; this increases PAK1 kinase activity. Phosphorylated at Ser-21 by PKB/AKT; this reduces interaction with NCK1 and association with focal adhesion sites. Activated by phosphorylation at Thr-422 by BRSK2. Upon DNA damage, phosphorylated at Thr-211 and translocates to the nucleoplasm. Phosphorylated at tyrosine residues, which can be enhanced by NTN1. As to expression, expressed predominantly in the brain, with higher expression in neuronal groups associated with motor function, and at lower levels in the spleen.

The protein localises to the cytoplasm. It localises to the cell junction. Its subcellular location is the focal adhesion. The protein resides in the cell projection. It is found in the lamellipodium. The protein localises to the cell membrane. It localises to the ruffle membrane. Its subcellular location is the invadopodium. The protein resides in the nucleus. It is found in the nucleoplasm. The protein localises to the chromosome. It localises to the cytoskeleton. Its subcellular location is the microtubule organizing center. The protein resides in the centrosome. The catalysed reaction is L-seryl-[protein] + ATP = O-phospho-L-seryl-[protein] + ADP + H(+). The enzyme catalyses L-threonyl-[protein] + ATP = O-phospho-L-threonyl-[protein] + ADP + H(+). With respect to regulation, phosphorylation of Thr-84 by OXSR1 inhibits activation. Activated by binding small G proteins. Binding of GTP-bound CDC42 or RAC1 to the autoregulatory region releases monomers from the autoinhibited dimer, and enables activation by phosphorylation of Thr-422. Protein kinase involved in intracellular signaling pathways downstream of integrins and receptor-type kinases that plays an important role in cytoskeleton dynamics, in cell adhesion, migration, proliferation, apoptosis, mitosis, and in vesicle-mediated transport processes. Can directly phosphorylate BAD and protects cells against apoptosis. Activated by interaction with CDC42 and RAC1. Functions as a GTPase effector that links the Rho-related GTPases CDC42 and RAC1 to the JNK MAP kinase pathway. Phosphorylates and activates MAP2K1, and thereby mediates activation of downstream MAP kinases. Involved in the reorganization of the actin cytoskeleton, actin stress fibers and of focal adhesion complexes. Phosphorylates the tubulin chaperone TBCB and thereby plays a role in the regulation of microtubule biogenesis and organization of the tubulin cytoskeleton. Plays a role in the regulation of insulin secretion in response to elevated glucose levels. Part of a ternary complex that contains PAK1, DVL1 and MUSK that is important for MUSK-dependent regulation of AChR clustering during the formation of the neuromuscular junction (NMJ). Activity is inhibited in cells undergoing apoptosis, potentially due to binding of CDC2L1 and CDC2L2. Phosphorylates MYL9/MLC2. Phosphorylates RAF1 at 'Ser-338' and 'Ser-339' resulting in: activation of RAF1, stimulation of RAF1 translocation to mitochondria, phosphorylation of BAD by RAF1, and RAF1 binding to BCL2. Phosphorylates SNAI1 at 'Ser-246' promoting its transcriptional repressor activity by increasing its accumulation in the nucleus. In podocytes, promotes NR3C2 nuclear localization. Required for atypical chemokine receptor ACKR2-induced phosphorylation of LIMK1 and cofilin (CFL1) and for the up-regulation of ACKR2 from endosomal compartment to cell membrane, increasing its efficiency in chemokine uptake and degradation. In synapses, seems to mediate the regulation of F-actin cluster formation performed by SHANK3, maybe through CFL1 phosphorylation and inactivation. Plays a role in RUFY3-mediated facilitating gastric cancer cells migration and invasion. In response to DNA damage, phosphorylates MORC2 which activates its ATPase activity and facilitates chromatin remodeling. In neurons, plays a crucial role in regulating GABA(A) receptor synaptic stability and hence GABAergic inhibitory synaptic transmission through its role in F-actin stabilization. In hippocampal neurons, necessary for the formation of dendritic spines and excitatory synapses; this function is dependent on kinase activity and may be exerted by the regulation of actomyosin contractility through the phosphorylation of myosin II regulatory light chain (MLC). Along with GIT1, positively regulates microtubule nucleation during interphase. Phosphorylates FXR1, promoting its localization to stress granules and activity. Phosphorylates ILK on 'Thr-173' and 'Ser-246', promoting nuclear export of ILK. In Rattus norvegicus (Rat), this protein is Serine/threonine-protein kinase PAK 1.